The chain runs to 337 residues: MPKQAIRIMDTTLRDGSHAIRHRFTKENVRQIVQALDEAGVPVIEVSHGDGLGGSSLQYGMSLVEEMELIEEAAKTSRRAKIAALLLPGIGTKKELQQAKDCGIQMVRIATQCSEADVSEQHFGLAKELGLETVGFLMMAHMLSPEELAQQAKLMESYGADIVYIVDSAGTMLPQDVIDRVIALKKVLNVPIGFHAHNNLGLAIGNSLAAIQAGATNIDASTRGLGAGSGNTQTEVLVAVLSRMGIETGIDLFQIMDAAEYIVDPLMDSPMIVNRDALTIGFTGVYSTFLWHAKQAGEKFGVDPREILIELGRRKAVAGQEDWILDVASDLSSAKGR.

Positions 6 to 256 (IRIMDTTLRD…ETGIDLFQIM (251 aa)) constitute a Pyruvate carboxyltransferase domain. 14–15 (RD) is a binding site for substrate. A Mn(2+)-binding site is contributed by Asp15. Residue His18 is the Proton acceptor of the active site. Ser168 and His195 together coordinate substrate. Residues His195 and His197 each coordinate Mn(2+). Substrate is bound at residue Tyr286.

It belongs to the 4-hydroxy-2-oxovalerate aldolase family.

It carries out the reaction (S)-4-hydroxy-2-oxopentanoate = acetaldehyde + pyruvate. This is 4-hydroxy-2-oxovalerate aldolase (nahM) from Geobacillus genomosp. 3.